The chain runs to 313 residues: Porphobilinogen deaminase (313 aa).

C242 bears the S-(dipyrrolylmethanemethyl)cysteine mark.

It belongs to the HMBS family. As to quaternary structure, monomer. Dipyrromethane serves as cofactor.

The enzyme catalyses 4 porphobilinogen + H2O = hydroxymethylbilane + 4 NH4(+). It functions in the pathway porphyrin-containing compound metabolism; protoporphyrin-IX biosynthesis; coproporphyrinogen-III from 5-aminolevulinate: step 2/4. Functionally, tetrapolymerization of the monopyrrole PBG into the hydroxymethylbilane pre-uroporphyrinogen in several discrete steps. In Enterobacter sp. (strain 638), this protein is Porphobilinogen deaminase.